We begin with the raw amino-acid sequence, 161 residues long: MKVTSYSRILIILAALVGALVVPLKAQDSQQDYVNAHNQARSQIGVGPMQWDEGLAAYARNYANQLKGDCRLVHSRGPYGENLAKSGGDLSGVAAVNLWVNEKANYNYDTNTCNGVCGHYTQVVWRNSVRLGCAKVRCNNGGTIISCNYDPPGNYANQKPY.

Positions 1-26 (MKVTSYSRILIILAALVGALVVPLKA) are cleaved as a signal peptide. An SCP domain is found at 34–149 (VNAHNQARSQ…NGGTIISCNY (116 aa)). Cystine bridges form between C70-C138, C113-C117, and C133-C147.

The protein belongs to the CRISP family. Expressed in flowers, stems and roots but not in leaves.

Probably involved in the defense reaction of plants against pathogens. The polypeptide is Pathogenesis-related protein 1 (Arabidopsis thaliana (Mouse-ear cress)).